The sequence spans 278 residues: HTH-type transcriptional activator RhaS (278 aa).

The 99-residue stretch at 174–272 folds into the HTH araC/xylS-type domain; it reads NQLLAWLEDH…DWSPRDIRQG (99 aa). DNA-binding regions (H-T-H motif) lie at residues 191–212 and 239–262; these read ESIA…KQQT and VTDI…RREF.

Binds DNA as a dimer.

The protein localises to the cytoplasm. Its function is as follows. Activates expression of the rhaBAD and rhaT operons. The sequence is that of HTH-type transcriptional activator RhaS from Citrobacter koseri (strain ATCC BAA-895 / CDC 4225-83 / SGSC4696).